The following is a 446-amino-acid chain: N-succinylarginine dihydrolase (446 aa).

Residues 19 to 28 (AGLSFGNVAS), N110, and 137 to 138 (HR) contribute to the substrate site. E174 is a catalytic residue. R213 contacts substrate. H249 is an active-site residue. Substrate contacts are provided by D251 and N364. The active-site Nucleophile is C370.

The protein belongs to the succinylarginine dihydrolase family. Homodimer.

It carries out the reaction N(2)-succinyl-L-arginine + 2 H2O + 2 H(+) = N(2)-succinyl-L-ornithine + 2 NH4(+) + CO2. It participates in amino-acid degradation; L-arginine degradation via AST pathway; L-glutamate and succinate from L-arginine: step 2/5. Catalyzes the hydrolysis of N(2)-succinylarginine into N(2)-succinylornithine, ammonia and CO(2). The sequence is that of N-succinylarginine dihydrolase from Burkholderia cenocepacia (strain HI2424).